Reading from the N-terminus, the 226-residue chain is Leucyl/phenylalanyl-tRNA--protein transferase (226 aa).

It belongs to the L/F-transferase family.

The protein resides in the cytoplasm. It carries out the reaction N-terminal L-lysyl-[protein] + L-leucyl-tRNA(Leu) = N-terminal L-leucyl-L-lysyl-[protein] + tRNA(Leu) + H(+). The catalysed reaction is N-terminal L-arginyl-[protein] + L-leucyl-tRNA(Leu) = N-terminal L-leucyl-L-arginyl-[protein] + tRNA(Leu) + H(+). The enzyme catalyses L-phenylalanyl-tRNA(Phe) + an N-terminal L-alpha-aminoacyl-[protein] = an N-terminal L-phenylalanyl-L-alpha-aminoacyl-[protein] + tRNA(Phe). Functionally, functions in the N-end rule pathway of protein degradation where it conjugates Leu, Phe and, less efficiently, Met from aminoacyl-tRNAs to the N-termini of proteins containing an N-terminal arginine or lysine. This is Leucyl/phenylalanyl-tRNA--protein transferase from Pseudomonas fluorescens (strain Pf0-1).